The chain runs to 755 residues: Probable ubiquitin carboxyl-terminal hydrolase creB (755 aa).

The disordered stretch occupies residues 1 to 32 (MGSFLRSLRRDVGPPTPSVGATPAKKEPPVPP). Residues 55-468 (FGMENYGNTC…CAYVLFYQET (414 aa)) enclose the USP domain. Cysteine 64 serves as the catalytic Nucleophile. Disordered stretches follow at residues 119–146 (EKQK…DSPE) and 237–270 (EASK…TPNT). Over residues 237 to 246 (EASKQPEPER) the composition is skewed to basic and acidic residues. Residues 254–270 (ADSTELSGSSGSKTPNT) are compositionally biased toward polar residues. Catalysis depends on histidine 419, which acts as the Proton acceptor. Residues 495–755 (TLKQNGYPLS…LKKKSFSILS (261 aa)) form a disordered region. Positions 547 to 560 (ESSPADPSTTASAT) are enriched in low complexity. The span at 577–648 (KKSDSHFKKE…RRHSPDDTKK (72 aa)) shows a compositional bias: basic and acidic residues. Positions 581–630 (SHFKKERAKEEKERKANEKEKEKQRRRDQEARIREQRREDAEIRAALEAS) form a coiled coil. Residues 654–666 (SRLKRGSKSFSHR) are compositionally biased toward basic residues. The span at 693 to 709 (NGASESQQQLPNGQSPG) shows a compositional bias: polar residues. Positions 718–733 (TGLDEERDTLKDPKHD) are enriched in basic and acidic residues. Positions 734–755 (RSGHHGKWRSFSLKKKSFSILS) are enriched in basic residues.

It belongs to the peptidase C19 family. As to quaternary structure, interacts with creA, creC and qutD.

The enzyme catalyses Thiol-dependent hydrolysis of ester, thioester, amide, peptide and isopeptide bonds formed by the C-terminal Gly of ubiquitin (a 76-residue protein attached to proteins as an intracellular targeting signal).. In terms of biological role, ubiquitin thioesterase component of the regulatory network controlling carbon source utilization through ubiquitination and deubiquitination involving creA, creB, creC, creD and acrB. Deubiquitinates the creA catabolic repressor and the quinate permease qutD. Also plays a role in response to carbon starvation and the control of extracellular proteases activity. This is Probable ubiquitin carboxyl-terminal hydrolase creB (creB) from Aspergillus flavus (strain ATCC 200026 / FGSC A1120 / IAM 13836 / NRRL 3357 / JCM 12722 / SRRC 167).